Here is a 248-residue protein sequence, read N- to C-terminus: Thioredoxin-like protein AAED1, chloroplastic (248 aa).

A chloroplast-targeting transit peptide spans 1-52 (MAIALSSSSTITSITLQPKLKTIHGLGTVLPGYSVKSHFRSVSLRRSAVVVS). An N-acetylalanine modification is found at Ala53.

It belongs to the peroxiredoxin-like PRXL2 family. PRXL2C subfamily.

The protein localises to the plastid. Its subcellular location is the chloroplast. This Arabidopsis thaliana (Mouse-ear cress) protein is Thioredoxin-like protein AAED1, chloroplastic.